Consider the following 561-residue polypeptide: Arginine--tRNA ligase (561 aa).

A 'HIGH' region motif is present at residues 129–139; the sequence is ANPTGPLHVGH.

Belongs to the class-I aminoacyl-tRNA synthetase family. In terms of assembly, monomer.

It localises to the cytoplasm. The catalysed reaction is tRNA(Arg) + L-arginine + ATP = L-arginyl-tRNA(Arg) + AMP + diphosphate. This chain is Arginine--tRNA ligase, found in Bordetella bronchiseptica (strain ATCC BAA-588 / NCTC 13252 / RB50) (Alcaligenes bronchisepticus).